The primary structure comprises 717 residues: Polyribonucleotide nucleotidyltransferase (717 aa).

Mg(2+)-binding residues include Asp486 and Asp492. One can recognise a KH domain in the interval Pro553–Ile612. An S1 motif domain is found at Gly622–Ala715. A disordered region spans residues Ser650–Arg681. The span at Arg654–His666 shows a compositional bias: basic and acidic residues.

This sequence belongs to the polyribonucleotide nucleotidyltransferase family. Mg(2+) is required as a cofactor.

It is found in the cytoplasm. It carries out the reaction RNA(n+1) + phosphate = RNA(n) + a ribonucleoside 5'-diphosphate. Functionally, involved in mRNA degradation. Catalyzes the phosphorolysis of single-stranded polyribonucleotides processively in the 3'- to 5'-direction. The sequence is that of Polyribonucleotide nucleotidyltransferase from Borrelia duttonii (strain Ly).